Reading from the N-terminus, the 214-residue chain is Transmembrane emp24 domain-containing protein p24delta10 (214 aa).

The N-terminal stretch at 1-24 (MFLQSQKLWTMLLILAIWSPISHS) is a signal peptide. The Lumenal portion of the chain corresponds to 25–181 (LHFDLHSGRT…QDLNRSTNTK (157 aa)). One can recognise a GOLD domain in the interval 34–149 (TKCIAEDIKS…VEVMEFEVKS (116 aa)). Positions 164 to 177 (LRDREEEMQDLNRS) form a coiled coil. Arg-167 carries the omega-N-methylated arginine modification. Asn-175 carries an N-linked (GlcNAc...) asparagine glycan. Residues 182–202 (MAWLSVLSFFVCIGVAGMQFL) traverse the membrane as a helical segment. Over 203–214 (HLKTFFEKKKVI) the chain is Cytoplasmic. A COPII vesicle coat-binding motif is present at residues 207-208 (FF). The COPI vesicle coat-binding motif lies at 207–214 (FFEKKKVI).

It belongs to the EMP24/GP25L family. Probably oligomerizes with other members of the EMP24/GP25L family. Associates with the COPI vesicle coat (coatomer). Associates with the COPII vesicle coat (coatomer).

It is found in the endoplasmic reticulum membrane. The protein resides in the golgi apparatus. Its subcellular location is the cis-Golgi network membrane. The protein localises to the golgi stack membrane. In terms of biological role, involved in vesicular protein trafficking. Mainly functions in the early secretory pathway. Thought to act as cargo receptor at the lumenal side for incorporation of secretory cargo molecules into transport vesicles and to be involved in vesicle coat formation at the cytoplasmic side. In Arabidopsis thaliana (Mouse-ear cress), this protein is Transmembrane emp24 domain-containing protein p24delta10.